A 113-amino-acid polypeptide reads, in one-letter code: MTADNPNQGQIAEHAARQYLQQRGLIFVEQNVRYRFGEIDIVMKDGSDWVFVEVKYRSASQYGGAVNSLSAAQAGRIRKAASHYIQLNRIDAICRFDVIAADPQGIQWIRDAF.

Belongs to the UPF0102 family.

In Shewanella halifaxensis (strain HAW-EB4), this protein is UPF0102 protein Shal_4069.